The primary structure comprises 642 residues: Threonine--tRNA ligase (642 aa).

The TGS domain maps to 1-61; that stretch reads MPIITLPDGS…EHDASLEIIT (61 aa). The segment at 244 to 535 is catalytic; the sequence is DHRKIGKQLD…LIEEYAGFFP (292 aa). Zn(2+)-binding residues include Cys-335, His-386, and His-512.

The protein belongs to the class-II aminoacyl-tRNA synthetase family. In terms of assembly, homodimer. Zn(2+) serves as cofactor.

It is found in the cytoplasm. It catalyses the reaction tRNA(Thr) + L-threonine + ATP = L-threonyl-tRNA(Thr) + AMP + diphosphate + H(+). Functionally, catalyzes the attachment of threonine to tRNA(Thr) in a two-step reaction: L-threonine is first activated by ATP to form Thr-AMP and then transferred to the acceptor end of tRNA(Thr). Also edits incorrectly charged L-seryl-tRNA(Thr). In Vibrio cholerae serotype O1 (strain M66-2), this protein is Threonine--tRNA ligase.